Here is a 183-residue protein sequence, read N- to C-terminus: Shikimate kinase (183 aa).

14–19 (GAGKTT) contacts ATP. Thr18 is a binding site for Mg(2+). Substrate is bound by residues Asp36, Arg60, and Gly82. ATP is bound at residue Arg120. Arg139 contributes to the substrate binding site. Gln156 is a binding site for ATP.

Belongs to the shikimate kinase family. Monomer. Mg(2+) serves as cofactor.

The protein resides in the cytoplasm. The catalysed reaction is shikimate + ATP = 3-phosphoshikimate + ADP + H(+). It participates in metabolic intermediate biosynthesis; chorismate biosynthesis; chorismate from D-erythrose 4-phosphate and phosphoenolpyruvate: step 5/7. Catalyzes the specific phosphorylation of the 3-hydroxyl group of shikimic acid using ATP as a cosubstrate. The protein is Shikimate kinase of Thiobacillus denitrificans (strain ATCC 25259 / T1).